The primary structure comprises 143 residues: Transcription antitermination protein NusB (143 aa).

This sequence belongs to the NusB family.

In terms of biological role, involved in transcription antitermination. Required for transcription of ribosomal RNA (rRNA) genes. Binds specifically to the boxA antiterminator sequence of the ribosomal RNA (rrn) operons. The sequence is that of Transcription antitermination protein NusB from Dehalococcoides mccartyi (strain ATCC BAA-2266 / KCTC 15142 / 195) (Dehalococcoides ethenogenes (strain 195)).